The sequence spans 300 residues: Porphobilinogen deaminase (300 aa).

An S-(dipyrrolylmethanemethyl)cysteine modification is found at Cys239.

It belongs to the HMBS family. As to quaternary structure, monomer. Dipyrromethane is required as a cofactor.

It carries out the reaction 4 porphobilinogen + H2O = hydroxymethylbilane + 4 NH4(+). It functions in the pathway porphyrin-containing compound metabolism; protoporphyrin-IX biosynthesis; coproporphyrinogen-III from 5-aminolevulinate: step 2/4. In terms of biological role, tetrapolymerization of the monopyrrole PBG into the hydroxymethylbilane pre-uroporphyrinogen in several discrete steps. The protein is Porphobilinogen deaminase of Francisella tularensis subsp. novicida (strain U112).